An 879-amino-acid polypeptide reads, in one-letter code: DNA mismatch repair protein MutS (879 aa).

629–636 (GPNMGGKS) serves as a coordination point for ATP.

Belongs to the DNA mismatch repair MutS family.

This protein is involved in the repair of mismatches in DNA. It is possible that it carries out the mismatch recognition step. This protein has a weak ATPase activity. The sequence is that of DNA mismatch repair protein MutS from Erythrobacter litoralis (strain HTCC2594).